A 228-amino-acid chain; its full sequence is Cytidylate kinase (228 aa).

Residue 17 to 25 (GPTASGKGT) participates in ATP binding.

Belongs to the cytidylate kinase family. Type 1 subfamily.

The protein resides in the cytoplasm. It carries out the reaction CMP + ATP = CDP + ADP. The catalysed reaction is dCMP + ATP = dCDP + ADP. The sequence is that of Cytidylate kinase from Burkholderia vietnamiensis (strain G4 / LMG 22486) (Burkholderia cepacia (strain R1808)).